A 531-amino-acid chain; its full sequence is MLCTGSNASTIIQEQKHQQDSASADHRSTLLGLETELKKDSRSLLFSCCCLALAWAAALPRASAAARSALTLASAFTLSLASTAAFSVFSLASAYAPALLCFCETFGSLKGYEVENHMNASVTMLEEAIMYSSFSSKKRIRHSSSLTNDLIEEILSRLHSKSVARFRCVSKQCASMFASPYFKKLFQTRSSAKPSLLFAIADYGIEEDYSMKFFSSPQLENTYEKTSSTLVAAAEFHVKFSPDKSIPIYLSEDPRYVSIGYASGLIYNYCGRYVGRPLICNPNTGRYAILPYRYTYRKAYSFFGFDPIDKQYKALSLPYVDGPGRSKVLTFGAGDLTWRNIKSHTEDISYRYYEYVIVCFDVTSEKFTFVGVQKFCLLINYKGKLDVIYWEDDVDIHEICYFAKDLDEYLDENLDADATNELHVWVLEDVEKQEWSKYAYTWTDDTFFHRHLSIAGATASGEIVFSMRKYTSKQPFYVFYFNPERNTLQRVEIQGFGEAFRTTCSVRTFVNHIEDLDVNDLEQLNYIGTRR.

One can recognise an F-box domain in the interval 141 to 188 (RHSSSLTNDLIEEILSRLHSKSVARFRCVSKQCASMFASPYFKKLFQT).

The protein is Putative F-box protein At2g02890 of Arabidopsis thaliana (Mouse-ear cress).